The sequence spans 621 residues: E3 SUMO-protein ligase PIAS2 (621 aa).

The SAP domain occupies Val-11–Leu-45. Residues Leu-19–Leu-23 carry the LXXLL motif motif. Residues Lys-46 and Lys-249 each participate in a glycyl lysine isopeptide (Lys-Gly) (interchain with G-Cter in SUMO2) cross-link. The 166-residue stretch at Gln-134–Leu-299 folds into the PINIT domain. The SP-RING-type zinc-finger motif lies at Pro-331–Asp-412. The Zn(2+) site is built by Cys-362, His-364, Cys-385, and Cys-388. Glycyl lysine isopeptide (Lys-Gly) (interchain with G-Cter in SUMO2) cross-links involve residues Lys-430, Lys-435, Lys-443, and Lys-452. The interval Ile-467–Thr-473 is SUMO1-binding. Phosphoserine is present on residues Ser-476, Ser-477, and Ser-478. The Nuclear localization signal motif lies at Pro-484 to Phe-492. A Glycyl lysine isopeptide (Lys-Gly) (interchain with G-Cter in SUMO2) cross-link involves residue Lys-489. The residue at position 499 (Ser-499) is a Phosphoserine. Residue Lys-502 forms a Glycyl lysine isopeptide (Lys-Gly) (interchain with G-Cter in SUMO2) linkage. The span at Thr-577–Ser-610 shows a compositional bias: low complexity. The interval Thr-577 to Asp-621 is disordered.

The protein belongs to the PIAS family. As to quaternary structure, binds SUMO1 and UBE2I. Interacts with AXIN1, JUN, MDM2, PARK7, TP53 and TP73 isoform alpha, but not TP73 isoform beta. Interacts with STAT4 following IL12 and IFN-alpha stimulation of T-cells. Interacts also with GTF2I, GTF2IRD1, IKFZ1, DAB2 and MSX2, as well as with several steroid receptors, including ESR1, ESR2, NR3C1, PGR, AR, and with NCOA2. Sumoylation of a target protein seems to enhance the interaction. Binds to sumoylated ELK1. Interacts with PLAG1. Binds DNA, such as CDKN1A promoter, in a sequence-specific manner. Interacts with KLF8; the interaction results in SUMO ligation and repression of KLF8 transcriptional activity and of its cell cycle progression into G(1) phase. Interacts with IFIH1/MDA5. Interacts with PML. Interacts with PRDM1. In terms of processing, sumoylated.

It localises to the nucleus speckle. Its subcellular location is the nucleus. The protein resides in the PML body. The enzyme catalyses S-ubiquitinyl-[E2 ubiquitin-conjugating enzyme]-L-cysteine + [acceptor protein]-L-lysine = [E2 ubiquitin-conjugating enzyme]-L-cysteine + N(6)-ubiquitinyl-[acceptor protein]-L-lysine.. Its pathway is protein modification; protein sumoylation. In terms of biological role, functions as an E3-type small ubiquitin-like modifier (SUMO) ligase, stabilizing the interaction between UBE2I and the substrate, and as a SUMO-tethering factor. Plays a crucial role as a transcriptional coregulation in various cellular pathways, including the STAT pathway, the p53 pathway and the steroid hormone signaling pathway. The effects of this transcriptional coregulation, transactivation or silencing may vary depending upon the biological context and PIAS2 isoform studied. However, it seems to be mostly involved in gene silencing. Binds to sumoylated ELK1 and enhances its transcriptional activity by preventing recruitment of HDAC2 by ELK1, thus reversing SUMO-mediated repression of ELK1 transactivation activity. Isoform PIASx-beta, but not isoform PIASx-alpha, promotes MDM2 sumoylation. Isoform PIASx-alpha promotes PARK7 sumoylation. Isoform PIASx-beta promotes NCOA2 sumoylation more efficiently than isoform PIASx-alpha. Sumoylates PML at'Lys-65' and 'Lys-160'. This is E3 SUMO-protein ligase PIAS2 (Pias2) from Mus musculus (Mouse).